Reading from the N-terminus, the 358-residue chain is Nicotinate-nucleotide--dimethylbenzimidazole phosphoribosyltransferase (358 aa).

Residue Glu314 is the Proton acceptor of the active site.

The protein belongs to the CobT family.

The catalysed reaction is 5,6-dimethylbenzimidazole + nicotinate beta-D-ribonucleotide = alpha-ribazole 5'-phosphate + nicotinate + H(+). It participates in nucleoside biosynthesis; alpha-ribazole biosynthesis; alpha-ribazole from 5,6-dimethylbenzimidazole: step 1/2. Catalyzes the synthesis of alpha-ribazole-5'-phosphate from nicotinate mononucleotide (NAMN) and 5,6-dimethylbenzimidazole (DMB). This chain is Nicotinate-nucleotide--dimethylbenzimidazole phosphoribosyltransferase, found in Mycobacterium marinum (strain ATCC BAA-535 / M).